Reading from the N-terminus, the 431-residue chain is Isocitrate lyase (431 aa).

Residues 1–21 (MSNVGTPRTAQEIQQDWDTNP) form a disordered region. Substrate is bound at residue 93–95 (SGW). Asp-155 serves as a coordination point for Mg(2+). Cys-193 (proton acceptor) is an active-site residue. Substrate-binding positions include 194–195 (GH), Arg-230, 315–319 (NCSPS), and Thr-349.

Belongs to the isocitrate lyase/PEP mutase superfamily. Isocitrate lyase family. Homotetramer. Requires Mg(2+) as cofactor.

The enzyme catalyses D-threo-isocitrate = glyoxylate + succinate. It functions in the pathway carbohydrate metabolism; glyoxylate cycle; (S)-malate from isocitrate: step 1/2. Its function is as follows. Involved in the metabolic adaptation in response to environmental changes. Catalyzes the reversible formation of succinate and glyoxylate from isocitrate, a key step of the glyoxylate cycle, which operates as an anaplerotic route for replenishing the tricarboxylic acid cycle during growth on fatty acid substrates. The polypeptide is Isocitrate lyase (aceA) (Corynebacterium efficiens (strain DSM 44549 / YS-314 / AJ 12310 / JCM 11189 / NBRC 100395)).